Here is a 206-residue protein sequence, read N- to C-terminus: MRPLTPRQAEILELIKRNISDTGMPPTRAEIARRLGFKSANAAEEHLKALAKKGCIEIIPGTSRGIRLTQEEPEEVELGLPLIGQVAAGEPILAQEHVEQHYKVDPAMFRPSADFLLRVRGDSMKDIGILEGDLLAVHKSQQARNGQVVVARVEDDVTVKRFEKKGNKVFLHAENEEYSPIEVDLANQSLSIEGLAVGVIRNGDWQ.

A DNA-binding region (H-T-H motif) is located at residues R28–K48. Residues S123 and K160 each act as for autocatalytic cleavage activity in the active site.

This sequence belongs to the peptidase S24 family. Homodimer.

The catalysed reaction is Hydrolysis of Ala-|-Gly bond in repressor LexA.. Its function is as follows. Represses a number of genes involved in the response to DNA damage (SOS response), including recA and lexA. In the presence of single-stranded DNA, RecA interacts with LexA causing an autocatalytic cleavage which disrupts the DNA-binding part of LexA, leading to derepression of the SOS regulon and eventually DNA repair. The polypeptide is LexA repressor (Shewanella piezotolerans (strain WP3 / JCM 13877)).